The sequence spans 432 residues: 3-phosphoshikimate 1-carboxyvinyltransferase (432 aa).

3-phosphoshikimate contacts are provided by Lys-22, Ser-23, and Arg-27. Lys-22 serves as a coordination point for phosphoenolpyruvate. The phosphoenolpyruvate site is built by Gly-96 and Arg-127. 3-phosphoshikimate-binding residues include Ser-173, Ser-174, Gln-175, Ser-201, Asp-316, Asn-339, and Lys-343. Gln-175 is a binding site for phosphoenolpyruvate. Asp-316 acts as the Proton acceptor in catalysis. Positions 347, 391, and 416 each coordinate phosphoenolpyruvate.

The protein belongs to the EPSP synthase family. In terms of assembly, monomer.

Its subcellular location is the cytoplasm. It catalyses the reaction 3-phosphoshikimate + phosphoenolpyruvate = 5-O-(1-carboxyvinyl)-3-phosphoshikimate + phosphate. Its pathway is metabolic intermediate biosynthesis; chorismate biosynthesis; chorismate from D-erythrose 4-phosphate and phosphoenolpyruvate: step 6/7. In terms of biological role, catalyzes the transfer of the enolpyruvyl moiety of phosphoenolpyruvate (PEP) to the 5-hydroxyl of shikimate-3-phosphate (S3P) to produce enolpyruvyl shikimate-3-phosphate and inorganic phosphate. This is 3-phosphoshikimate 1-carboxyvinyltransferase from Histophilus somni (Haemophilus somnus).